A 198-amino-acid polypeptide reads, in one-letter code: Autophagy-related protein 33 (198 aa).

3 consecutive transmembrane segments (helical) span residues 17–37 (VSLG…LPAL), 60–80 (PVLA…FLAP), and 86–106 (PYLL…ILIP). The disordered stretch occupies residues 111–147 (APRRTASSAPRKSSRAKMEASYEVLGDAHSEPASDED). Positions 112 to 121 (PRRTASSAPR) are enriched in low complexity. Over residues 126–142 (AKMEASYEVLGDAHSEP) the composition is skewed to basic and acidic residues. Residues 171–191 (TAISALGFAMAVVGIWGDGAP) form a helical membrane-spanning segment.

This sequence belongs to the ATG33 family.

It localises to the mitochondrion membrane. Its function is as follows. Involved in the selective degradation of mitochondria via autophagy during starvation and at post-log phase. Autophagy is required for proper vegetative growth, asexual/sexual reproduction, and full virulence. Autophagy is particularly involved in the biosynthesis of deoxynivalenol (DON), an important virulence determinant. The polypeptide is Autophagy-related protein 33 (Gibberella zeae (strain ATCC MYA-4620 / CBS 123657 / FGSC 9075 / NRRL 31084 / PH-1) (Wheat head blight fungus)).